The chain runs to 303 residues: Crk-like protein (303 aa).

The SH2 domain maps to Trp14–Ala102. The SH3 1 domain occupies Glu123–Arg183. A Phosphotyrosine modification is found at Tyr127. Residues Ser184–Pro203 are disordered. Tyr207 is subject to Phosphotyrosine. An SH3 2 domain is found at Asn235 to Pro296.

It belongs to the CRK family. Interacts with DOCK2 and EPOR. Interacts with phosphorylated CBLB and IRS4. Interacts with INPP5D/SHIP1. Interacts with BCAR1/CAS and NEDD9/HEF1. In terms of processing, phosphorylated on tyrosine. Phosphorylation is prominent during early development, but decreases at later embryonic stages and in newborn mice.

May mediate the transduction of intracellular signals. This Mus musculus (Mouse) protein is Crk-like protein (Crkl).